We begin with the raw amino-acid sequence, 105 residues long: Chloroacetanilide N-alkylformylase 1, ferredoxin component (105 aa).

Residues 2–105 form the 2Fe-2S ferredoxin-type domain; it reads PTIIVTTRDG…GLRVAIAPED (104 aa). Positions 40, 46, 49, and 86 each coordinate [2Fe-2S] cluster.

It belongs to the adrenodoxin/putidaredoxin family. In terms of assembly, the chloroacetanilide N-alkylformylase multicomponent enzyme system is composed of an oxygenase component (CndA) and an electron transfer component formed by a ferredoxin reductase (CndC1) and a ferredoxin (CndB1). In vitro, chloroacetanilide N-alkylformylase assays in which CndB1 is substituted for CndB2 demonstrate that the two enzymes possess nearly identical activities. [2Fe-2S] cluster serves as cofactor.

Component of the chloroacetanilide N-alkylformylase multicomponent enzyme system involved in the degradation of chloroacetanilide herbicides (N-alkoxyalkyl-N-chloroacetyl-substituted aniline derivatives). In vitro, functions as an intermediate electron transfer protein. In Rhizorhabdus wittichii (strain DC-6 / KACC 16600) (Sphingomonas wittichii), this protein is Chloroacetanilide N-alkylformylase 1, ferredoxin component.